Reading from the N-terminus, the 484-residue chain is MSGEDAPAQQQNAEEQKQQETKTPAESPKTESKPDPPPTSASTEAAATAAAAADTPAPAAEKAPEEDTFTYRALVLTGYGGYDKVKLQVKKGKPALKSGEVMVRVKMCGLNFADLMARQGLYDRLPSPPVTPGMECSGVIEAVGEEVTDRKVGDKVLVLNRSGMWQEVVVVASTHTFLMPEGMSFEEAAALPVNYITAYMMLFDFGHLRPNQSVLVHMAAGGVGIAATQLCKTVNDVTVFGTASASKHEVISQGGVTHPIDYRTRDYVEEVRKISPKGLDIVLDPLGGSDTHKGYNLLKPMGKLISYGAANMLAGQKKNLFAVAKTWYQQFSVHTLSLIQGNRSVCGFHLGYLDSETELIDQAMTAVMDLYRQGKVKPRIDSTYHLEQVGDAMRRMQERNNIGKIILTTEPMKEEEKKEEAKKDEEKKDDKKKDDKKKDDKKKEDKKKDEAKKEEKKDEKKKEEAKKDDKKAEEKKEEVKKEEN.

2 stretches are compositionally biased toward low complexity: residues 1–13 (MSGE…QQNA) and 40–61 (SAST…PAAE). Disordered stretches follow at residues 1–65 (MSGE…KAPE) and 402–484 (IGKI…KEEN). Over residues 411-484 (PMKEEEKKEE…KKEEVKKEEN (74 aa)) the composition is skewed to basic and acidic residues.

This sequence belongs to the zinc-containing alcohol dehydrogenase family. Quinone oxidoreductase subfamily.

The polypeptide is Synaptic vesicle membrane protein VAT-1 homolog (Danio rerio (Zebrafish)).